Here is a 648-residue protein sequence, read N- to C-terminus: Threonine--tRNA ligase (648 aa).

One can recognise a TGS domain in the interval 1–61; it reads MIKITLPDGS…TTDGSLVLYT (61 aa). The catalytic stretch occupies residues 240-539; the sequence is DHRKLGKELE…LLEHTAGNFP (300 aa). The Zn(2+) site is built by cysteine 335, histidine 386, and histidine 516.

It belongs to the class-II aminoacyl-tRNA synthetase family. In terms of assembly, homodimer. Zn(2+) serves as cofactor.

Its subcellular location is the cytoplasm. The enzyme catalyses tRNA(Thr) + L-threonine + ATP = L-threonyl-tRNA(Thr) + AMP + diphosphate + H(+). Catalyzes the attachment of threonine to tRNA(Thr) in a two-step reaction: L-threonine is first activated by ATP to form Thr-AMP and then transferred to the acceptor end of tRNA(Thr). Also edits incorrectly charged L-seryl-tRNA(Thr). This Flavobacterium psychrophilum (strain ATCC 49511 / DSM 21280 / CIP 103535 / JIP02/86) protein is Threonine--tRNA ligase.